Consider the following 106-residue polypeptide: Putative double-stranded DNA mimic protein VP1949 (106 aa).

This sequence belongs to the putative dsDNA mimic protein family.

In terms of biological role, may act as a double-stranded DNA (dsDNA) mimic. Probably regulates the activity of a dsDNA-binding protein. This Vibrio parahaemolyticus serotype O3:K6 (strain RIMD 2210633) protein is Putative double-stranded DNA mimic protein VP1949.